The primary structure comprises 199 residues: Recombination protein RecR (199 aa).

Residues cysteine 58–cysteine 73 form a C4-type zinc finger. The Toprim domain occupies glycine 81–proline 176.

It belongs to the RecR family.

Functionally, may play a role in DNA repair. It seems to be involved in an RecBC-independent recombinational process of DNA repair. It may act with RecF and RecO. In Cereibacter sphaeroides (strain ATCC 17029 / ATH 2.4.9) (Rhodobacter sphaeroides), this protein is Recombination protein RecR.